Reading from the N-terminus, the 563-residue chain is Forkhead box protein O (563 aa).

2 disordered regions span residues 1 to 72 and 177 to 243; these read MDDF…DPQQ and KSVR…SYQL. T43 is modified (phosphothreonine; by PKB/AKT1). Residues 58–72 show a composition bias toward polar residues; sequence TKASNQQLANGDPQQ. The fork-head DNA-binding region spans 90-196; the sequence is WGNLSYADLI…ETSRYEKRRG (107 aa). S185 is modified (phosphoserine; by PKB/AKT1). A compositionally biased stretch (polar residues) spans 216–225; that stretch reads ATPSPSSSVS. Position 253 is a phosphoserine; by PKB/AKT1 (S253). 3 positions are modified to phosphoserine: S256, S257, and S262. Positions 317 to 371 are disordered; sequence AASGLPTQPPPPYQPPQHPQHTQGYALNGPGLSPNSVTTTMSPAYPNSEPSSDSL. The segment covering 323 to 334 has biased composition (pro residues); it reads TQPPPPYQPPQH. The segment covering 349–358 has biased composition (polar residues); the sequence is SPNSVTTTMS.

Interacts with melt.

The protein resides in the cytoplasm. It localises to the nucleus. In terms of biological role, transcription factor involved in the regulation of the insulin signaling pathway. Consistently activates both the downstream target Thor\d4EBP and the feedback control target InR. Involved in negative regulation of the cell cycle, modulating cell growth and proliferation. In response to cellular stresses, such as nutrient deprivation or increased levels of reactive oxygen species, foxo is activated and inhibits growth through the action of target genes such as Thor. Foxo activated in the adult fat body can regulate lifespan in adults; an insulin peptide itself may function as one secondary messenger of insulin-regulated aging. Also regulates Lip4, homolog of human acid lipases, thereby acting as a key modulator of lipid metabolism by insulin signaling and integrates insulin responses to glucose and lipid homeostasis. This is Forkhead box protein O from Drosophila mojavensis (Fruit fly).